Consider the following 324-residue polypeptide: HTH-type transcriptional regulator CysB (324 aa).

The 59-residue stretch at 1–59 (MKLQQLRYIVEVVNHNLNVSSTAEGLYTSQPGISKQVRMLEDELGIQIFARSGKHLTQV) folds into the HTH lysR-type domain. The segment at residues 19-38 (VSSTAEGLYTSQPGISKQVR) is a DNA-binding region (H-T-H motif).

It belongs to the LysR transcriptional regulatory family. As to quaternary structure, homotetramer.

It is found in the cytoplasm. In terms of biological role, this protein is a positive regulator of gene expression for the cysteine regulon. The inducer for CysB is N-acetylserine. Thiosulfate and sulfide act as anti-inducers. This chain is HTH-type transcriptional regulator CysB (cysB), found in Klebsiella pneumoniae.